A 352-amino-acid polypeptide reads, in one-letter code: UDP-3-O-acylglucosamine N-acyltransferase (352 aa).

The active-site Proton acceptor is H257.

The protein belongs to the transferase hexapeptide repeat family. LpxD subfamily. As to quaternary structure, homotrimer.

The enzyme catalyses a UDP-3-O-[(3R)-3-hydroxyacyl]-alpha-D-glucosamine + a (3R)-hydroxyacyl-[ACP] = a UDP-2-N,3-O-bis[(3R)-3-hydroxyacyl]-alpha-D-glucosamine + holo-[ACP] + H(+). The protein operates within bacterial outer membrane biogenesis; LPS lipid A biosynthesis. Its function is as follows. Catalyzes the N-acylation of UDP-3-O-acylglucosamine using 3-hydroxyacyl-ACP as the acyl donor. Is involved in the biosynthesis of lipid A, a phosphorylated glycolipid that anchors the lipopolysaccharide to the outer membrane of the cell. The polypeptide is UDP-3-O-acylglucosamine N-acyltransferase (Methylobacterium sp. (strain 4-46)).